The sequence spans 208 residues: Imidazole glycerol phosphate synthase subunit HisH (208 aa).

One can recognise a Glutamine amidotransferase type-1 domain in the interval 1–206 (MIVIIDYDTG…KEVIRSCKSS (206 aa)). Residue Cys-79 is the Nucleophile of the active site. Active-site residues include His-181 and Glu-183.

As to quaternary structure, heterodimer of HisH and HisF.

It localises to the cytoplasm. It catalyses the reaction 5-[(5-phospho-1-deoxy-D-ribulos-1-ylimino)methylamino]-1-(5-phospho-beta-D-ribosyl)imidazole-4-carboxamide + L-glutamine = D-erythro-1-(imidazol-4-yl)glycerol 3-phosphate + 5-amino-1-(5-phospho-beta-D-ribosyl)imidazole-4-carboxamide + L-glutamate + H(+). The catalysed reaction is L-glutamine + H2O = L-glutamate + NH4(+). Its pathway is amino-acid biosynthesis; L-histidine biosynthesis; L-histidine from 5-phospho-alpha-D-ribose 1-diphosphate: step 5/9. Functionally, IGPS catalyzes the conversion of PRFAR and glutamine to IGP, AICAR and glutamate. The HisH subunit catalyzes the hydrolysis of glutamine to glutamate and ammonia as part of the synthesis of IGP and AICAR. The resulting ammonia molecule is channeled to the active site of HisF. The protein is Imidazole glycerol phosphate synthase subunit HisH of Listeria welshimeri serovar 6b (strain ATCC 35897 / DSM 20650 / CCUG 15529 / CIP 8149 / NCTC 11857 / SLCC 5334 / V8).